The following is a 200-amino-acid chain: Lipopolysaccharide core heptose(II)-phosphate phosphatase (200 aa).

Positions 1–25 (MLAFCRSSLKSKKYFIILLALAAIA) are cleaved as a signal peptide.

The protein belongs to the phosphoglycerate mutase family. Ais subfamily.

It is found in the periplasm. It functions in the pathway bacterial outer membrane biogenesis; lipopolysaccharide metabolism. Functionally, catalyzes the dephosphorylation of heptose(II) of the outer membrane lipopolysaccharide core. The chain is Lipopolysaccharide core heptose(II)-phosphate phosphatase from Shigella flexneri serotype 5b (strain 8401).